A 92-amino-acid chain; its full sequence is Small ribosomal subunit protein uS19c (92 aa).

Belongs to the universal ribosomal protein uS19 family.

It localises to the plastid. The protein localises to the chloroplast. In terms of biological role, protein S19 forms a complex with S13 that binds strongly to the 16S ribosomal RNA. In Chara vulgaris (Common stonewort), this protein is Small ribosomal subunit protein uS19c.